Here is a 412-residue protein sequence, read N- to C-terminus: Subtilisin-like protease 6 (412 aa).

Residues 1-20 (MGFITKAIPIVLAALSTVNG) form the signal peptide. Positions 21 to 126 (AKILEAGPHA…VVRTSTNGTN (106 aa)) are excised as a propeptide. Residues 36-120 (KYIVVMKREV…YIEPDFVVRT (85 aa)) form the Inhibitor I9 domain. Asparagine 123 and asparagine 126 each carry an N-linked (GlcNAc...) asparagine glycan. In terms of domain architecture, Peptidase S8 spans 135–412 (SWGLARVSSK…SKLIYNGSGK (278 aa)). Active-site charge relay system residues include aspartate 167 and histidine 198. Asparagine 252 and asparagine 264 each carry an N-linked (GlcNAc...) asparagine glycan. Serine 358 functions as the Charge relay system in the catalytic mechanism. The N-linked (GlcNAc...) asparagine glycan is linked to asparagine 408.

It belongs to the peptidase S8 family.

It is found in the secreted. Secreted subtilisin-like serine protease with keratinolytic activity that contributes to pathogenicity. The chain is Subtilisin-like protease 6 (SUB6) from Trichophyton equinum (Horse ringworm fungus).